The chain runs to 116 residues: Galanin-like peptide (116 aa).

The signal sequence occupies residues 1-24 (MAPPSVPLVLLLVLLLSLAETPAS). The propeptide occupies 87–116 (NVMETFAKPEIGDLGMLSMKIPKEEDVLKS).

The protein belongs to the galanin family. In terms of tissue distribution, isoform 2 is found in ganglia of ganglioneuroma and ganglioneuroblastoma, as well as in differentiated tumor cells of neuroblastoma tissues. Not found in undifferentiated neuroblasts. Isoform 2 is found in the skin, in pericytes covering microvascular arterioles and venules on their abluminal surfaces. In larger vessels, isoform 2 is expressed in layers of smooth muscle cells. Isoform 2 is not detected in endothelial cells.

Its subcellular location is the secreted. In terms of biological role, hypothalamic neuropeptide which binds to the G-protein-coupled galanin receptors (GALR1, GALR2 and GALR3). Involved in a large number of putative physiological functions in CNS homeostatic processes, including the regulation of gonadotropin-releasing hormone secretion. Exhibits potent and dose-dependent vasoconstrictor and anti-edema activity in the cutaneous microvasculature, a physiologic effects which does not appear to be mediated via GALR1 or GALR2. Exhibits antimicrobial activity against Gram-negative bacterias, inducing bacterial membrane blebbing. The protein is Galanin-like peptide (GALP) of Homo sapiens (Human).